Consider the following 106-residue polypeptide: Urease subunit beta (106 aa).

Belongs to the urease beta subunit family. As to quaternary structure, heterotrimer of UreA (gamma), UreB (beta) and UreC (alpha) subunits. Three heterotrimers associate to form the active enzyme.

Its subcellular location is the cytoplasm. The enzyme catalyses urea + 2 H2O + H(+) = hydrogencarbonate + 2 NH4(+). It participates in nitrogen metabolism; urea degradation; CO(2) and NH(3) from urea (urease route): step 1/1. The sequence is that of Urease subunit beta from Acinetobacter baumannii (strain ATCC 17978 / DSM 105126 / CIP 53.77 / LMG 1025 / NCDC KC755 / 5377).